We begin with the raw amino-acid sequence, 459 residues long: Putrescine aminotransferase (459 aa).

Pyridoxal 5'-phosphate contacts are provided by residues 150–151 (GT) and Q274. An N6-(pyridoxal phosphate)lysine modification is found at K300. A pyridoxal 5'-phosphate-binding site is contributed by T332.

This sequence belongs to the class-III pyridoxal-phosphate-dependent aminotransferase family. Putrescine aminotransferase subfamily. Pyridoxal 5'-phosphate serves as cofactor.

It catalyses the reaction an alkane-alpha,omega-diamine + 2-oxoglutarate = an omega-aminoaldehyde + L-glutamate. The enzyme catalyses putrescine + 2-oxoglutarate = 1-pyrroline + L-glutamate + H2O. It carries out the reaction cadaverine + 2-oxoglutarate = 5-aminopentanal + L-glutamate. It participates in amine and polyamine degradation; putrescine degradation; 4-aminobutanal from putrescine (transaminase route): step 1/1. In terms of biological role, catalyzes the aminotransferase reaction from putrescine to 2-oxoglutarate, leading to glutamate and 4-aminobutanal, which spontaneously cyclizes to form 1-pyrroline. This is the first step in one of two pathways for putrescine degradation, where putrescine is converted into 4-aminobutanoate (gamma-aminobutyrate or GABA) via 4-aminobutanal. Also functions as a cadaverine transaminase in a a L-lysine degradation pathway to succinate that proceeds via cadaverine, glutarate and L-2-hydroxyglutarate. This Escherichia coli O6:H1 (strain CFT073 / ATCC 700928 / UPEC) protein is Putrescine aminotransferase.